A 617-amino-acid polypeptide reads, in one-letter code: MEHIRTTKVEQVKLLDRFSTNNKSLTGTLYLTATHLLFIDAQQKETWILHHHIASVEKLALTTSGCPLVIQCKNFRIVHFIVPRERDCHDIYNSLLQLSKQAKYEDLYAFSYNPKQNDTERRNGWQLIDLAAEYERMGVPNANWQLSDANREYKVCETYPRELYVPRTASRPVIVGSSNFRSKGRLPVLSYCRQGTEAAICRCSQPLSGFSARCLEDEHLLQAISKANPGNRYMYVVDTRPKLNAIANRAAGKGYENEDNYSNIRFQFVGIENIHVMRSSLQKLLEVNGSKGLSVNDFYSGLESSGWLRHIKAVLDAAIFLAKAIVVENASVLVHCSDGWDRTSQVCSLGSLLLDSYYRTMKGFMVLIEKDWISFGHKFSERCGHLDGDPREVSPVFTQFLECVWHLTQQFPQAFEFNEAFLLQIHEHIHSCQFGNFLGNCQKEREELRLKEKTYSLWPFLLDDKKKYLNPLYSSKSQRLTVLEPNTASFNFKFWRNMYHQFDRTLHPRQSVLSIIMNMNEQSKQLEEDIKDLEAKIKQCKNGILTKELLHAVHPESPALKTSLCLKEPSLLPVKDTLRAIEGSSPADNRYCDYAEEFSKSEPTVVSLEYGVARMTC.

In terms of domain architecture, GRAM spans 1–101; sequence MEHIRTTKVE…YNSLLQLSKQ (101 aa). An interaction with RAB1B region spans residues 2–141; the sequence is EHIRTTKVEQ…AEYERMGVPN (140 aa). Tyr-108 is modified (phosphotyrosine). The Myotubularin phosphatase domain maps to 124–499; it reads GWQLIDLAAE…FNFKFWRNMY (376 aa). Residues Asn-248, Asn-273, and Ile-274 each coordinate a 1,2-diacyl-sn-glycero-3-phospho-(1D-myo-inositol-3,5-bisphosphate). The a 1,2-diacyl-sn-glycero-3-phospho-(1D-myo-inositol-3-phosphate) site is built by Asn-248, Asn-273, and Ile-274. Catalysis depends on Cys-336, which acts as the Phosphocysteine intermediate. A 1,2-diacyl-sn-glycero-3-phospho-(1D-myo-inositol-3,5-bisphosphate) is bound by residues Ser-337, Asp-338, Gly-339, Trp-340, Asp-341, Arg-342, Lys-378, and Arg-382. Ser-337, Asp-338, Gly-339, Trp-340, Asp-341, and Arg-342 together coordinate a 1,2-diacyl-sn-glycero-3-phospho-(1D-myo-inositol-3-phosphate). Arg-382 contributes to the a 1,2-diacyl-sn-glycero-3-phospho-(1D-myo-inositol-3-phosphate) binding site. Ser-557, Ser-585, and Ser-607 each carry phosphoserine.

This sequence belongs to the protein-tyrosine phosphatase family. Non-receptor class myotubularin subfamily. As to quaternary structure, homodimer. Heterodimer (via C-terminus) with MTMR9 (via C-terminus). Interacts with ALKBH4. Interacts with KCNN4. Interacts (via GRAM domain) with RAB1B (in GDP-bound form); the interaction regulates MTMR6 recruitment to the endoplasmic reticulum-Golgi intermediate compartment. As to expression, isoform 1: Ubiquitously expressed including in heart, brain, spleen, lung, liver, muscle, kidney and testis (at protein level). Isoform 2: Expressed in testis (at protein level).

The protein localises to the cytoplasm. It localises to the endoplasmic reticulum-Golgi intermediate compartment. It is found in the cell projection. Its subcellular location is the ruffle membrane. The protein resides in the endoplasmic reticulum. It carries out the reaction a 1,2-diacyl-sn-glycero-3-phospho-(1D-myo-inositol-3,5-bisphosphate) + H2O = a 1,2-diacyl-sn-glycero-3-phospho-(1D-myo-inositol-5-phosphate) + phosphate. The catalysed reaction is a 1,2-diacyl-sn-glycero-3-phospho-(1D-myo-inositol-3-phosphate) + H2O = a 1,2-diacyl-sn-glycero-3-phospho-(1D-myo-inositol) + phosphate. The enzyme catalyses 1,2-dioctanoyl-sn-glycero-3-phospho-(1D-myo-inositol-3,5-bisphosphate) + H2O = 1,2-dioctanoyl-sn-glycero-3-phospho-(1D-myo-inositol-5-phosphate) + phosphate. It catalyses the reaction 1,2-dioctanoyl-sn-glycero-3-phospho-(1-D-myo-inositol-3-phosphate) + H2O = 1,2-dioctanoyl-sn-glycero-3-phospho-(1D-myo-inositol) + phosphate. With respect to regulation, allosterically activated by phosphatidylserine and/or phosphatidylinositol 4-phosphate (PtdIns(4)P), and phosphatidylinositol 5-phosphate (PtdIns(5)P). Interaction with MTMR9 increases catalytic activity towards phosphatidylinositol 3,5-bisphosphate. Its function is as follows. Lipid phosphatase that specifically dephosphorylates the D-3 position of phosphatidylinositol 3-phosphate and phosphatidylinositol 3,5-bisphosphate, generating phosphatidylinositol and phosphatidylinositol 5-phosphate. Binds with high affinity to phosphatidylinositol 3,5-bisphosphate (PtdIns(3,5)P2) but also to phosphatidylinositol 3-phosphate (PtdIns(3)P), phosphatidylinositol 4-phosphate (PtdIns(4)P), and phosphatidylinositol 5-phosphate (PtdIns(5)P), phosphatidic acid and phosphatidylserine. Negatively regulates ER-Golgi protein transport. Probably in association with MTMR9, plays a role in the late stages of macropinocytosis by dephosphorylating phosphatidylinositol 3-phosphate in membrane ruffles. Acts as a negative regulator of KCNN4/KCa3.1 channel activity in CD4(+) T-cells possibly by decreasing intracellular levels of phosphatidylinositol 3-phosphate. Negatively regulates proliferation of reactivated CD4(+) T-cells. In complex with MTMR9, negatively regulates DNA damage-induced apoptosis. The formation of the MTMR6-MTMR9 complex stabilizes both MTMR6 and MTMR9 protein levels. The polypeptide is Phosphatidylinositol-3,5-bisphosphate 3-phosphatase MTMR6 (Mus musculus (Mouse)).